We begin with the raw amino-acid sequence, 306 residues long: GTP cyclohydrolase FolE2 (306 aa).

It belongs to the GTP cyclohydrolase IV family.

It carries out the reaction GTP + H2O = 7,8-dihydroneopterin 3'-triphosphate + formate + H(+). Its pathway is cofactor biosynthesis; 7,8-dihydroneopterin triphosphate biosynthesis; 7,8-dihydroneopterin triphosphate from GTP: step 1/1. In terms of biological role, converts GTP to 7,8-dihydroneopterin triphosphate. This is GTP cyclohydrolase FolE2 from Pseudoalteromonas atlantica (strain T6c / ATCC BAA-1087).